The chain runs to 1141 residues: Probable ubiquitin carboxyl-terminal hydrolase 2 (1141 aa).

Threonine 112 bears the Phosphothreonine mark. Serine 113 carries the phosphoserine modification. Phosphothreonine is present on threonine 115. One can recognise a USP domain in the interval 614 to 1124; the sequence is IGLENTGNLC…NPYMLTYIRK (511 aa). The active-site Nucleophile is cysteine 623. Threonine 721 is modified (phosphothreonine). Serine 722 bears the Phosphoserine mark. Residues 748 to 770 form a disordered region; sequence EEQAQGLEQEQGQDEAKSPAEQS. The active-site Proton acceptor is histidine 1076.

This sequence belongs to the peptidase C19 family.

The enzyme catalyses Thiol-dependent hydrolysis of ester, thioester, amide, peptide and isopeptide bonds formed by the C-terminal Gly of ubiquitin (a 76-residue protein attached to proteins as an intracellular targeting signal).. The protein is Probable ubiquitin carboxyl-terminal hydrolase 2 (ubp2) of Schizosaccharomyces pombe (strain 972 / ATCC 24843) (Fission yeast).